Here is a 229-residue protein sequence, read N- to C-terminus: Ribonuclease 3 (229 aa).

The region spanning 7-132 (ISAFCDRIGH…VIAAVYRDAG (126 aa)) is the RNase III domain. Glu-45 contacts Mg(2+). The active site involves Asp-49. Asp-118 and Glu-121 together coordinate Mg(2+). The active site involves Glu-121. Positions 157-226 (DPKTALQEWA…AKALLAQVES (70 aa)) constitute a DRBM domain.

It belongs to the ribonuclease III family. In terms of assembly, homodimer. Mg(2+) serves as cofactor.

The protein localises to the cytoplasm. It catalyses the reaction Endonucleolytic cleavage to 5'-phosphomonoester.. Digests double-stranded RNA. Involved in the processing of primary rRNA transcript to yield the immediate precursors to the large and small rRNAs (23S and 16S). Processes some mRNAs, and tRNAs when they are encoded in the rRNA operon. Processes pre-crRNA and tracrRNA of type II CRISPR loci if present in the organism. In Dinoroseobacter shibae (strain DSM 16493 / NCIMB 14021 / DFL 12), this protein is Ribonuclease 3.